We begin with the raw amino-acid sequence, 189 residues long: Flavin prenyltransferase UbiX (189 aa).

Residues 11–13 (GAS), Ser-37, 88–91 (SMRT), and Arg-123 each bind FMN. Tyr-153 is a binding site for dimethylallyl phosphate.

The protein belongs to the UbiX/PAD1 family.

The catalysed reaction is dimethylallyl phosphate + FMNH2 = prenylated FMNH2 + phosphate. In terms of biological role, flavin prenyltransferase that catalyzes the synthesis of the prenylated FMN cofactor (prenyl-FMN) for 4-hydroxy-3-polyprenylbenzoic acid decarboxylase UbiD. The prenyltransferase is metal-independent and links a dimethylallyl moiety from dimethylallyl monophosphate (DMAP) to the flavin N5 and C6 atoms of FMN. The chain is Flavin prenyltransferase UbiX from Neisseria meningitidis serogroup B (strain ATCC BAA-335 / MC58).